The following is a 429-amino-acid chain: Neuronal pentraxin-2 (429 aa).

The N-terminal stretch at 1–14 is a signal peptide; that stretch reads MLALLTVGVALAVA. Asn-146 and Asn-187 each carry an N-linked (GlcNAc...) asparagine glycan. A Pentraxin (PTX) domain is found at 221-422; that stretch reads DAFKVSLPLR…GASKWPVETC (202 aa). The cysteines at positions 251 and 311 are disulfide-linked. Positions 275, 353, 354, 355, and 365 each coordinate Ca(2+). A glycan (N-linked (GlcNAc...) asparagine) is linked at Asn-391.

Homooligomer or heterooligomer (probably pentamer) with neuronal pentraxin receptor (NPTXR). Ca(2+) serves as cofactor.

The protein resides in the secreted. Its function is as follows. Likely to play role in the modification of cellular properties that underlie long-term plasticity. Binds to agar matrix in a calcium-dependent manner. The sequence is that of Neuronal pentraxin-2 (Nptx2) from Mus musculus (Mouse).